The chain runs to 177 residues: Peroxiredoxin-2 (177 aa).

Ala2 bears the N-acetylalanine mark. The 159-residue stretch at 6 to 164 folds into the Thioredoxin domain; the sequence is ARIGKPAPDF…ALRLVQAFQY (159 aa). Cys51 acts as the Cysteine sulfenic acid (-SOH) intermediate in catalysis. Ser112 carries the post-translational modification Phosphoserine.

This sequence belongs to the peroxiredoxin family. AhpC/Prx1 subfamily. As to quaternary structure, homodimer; disulfide-linked, upon oxidation. 5 homodimers assemble to form a ring-like decamer. Interacts with TIPIN. Post-translationally, the enzyme can be inactivated by further oxidation of the cysteine sulfenic acid (C(P)-SOH) to sulphinic acid (C(P)-SO2H) instead of its condensation to a disulfide bond. It can be reactivated by forming a transient disulfide bond with sulfiredoxin SRXN1, which reduces the cysteine sulfinic acid in an ATP- and Mg-dependent manner. In terms of processing, acetylation increases resistance to transition to high molecular-mass complexes. Deacetylated by HDAC6 which decreases reducing activity.

Its subcellular location is the cytoplasm. It carries out the reaction a hydroperoxide + [thioredoxin]-dithiol = an alcohol + [thioredoxin]-disulfide + H2O. Its function is as follows. Thiol-specific peroxidase that catalyzes the reduction of hydrogen peroxide and organic hydroperoxides to water and alcohols, respectively. Plays a role in cell protection against oxidative stress by detoxifying peroxides and as sensor of hydrogen peroxide-mediated signaling events. Might participate in the signaling cascades of growth factors and tumor necrosis factor-alpha by regulating the intracellular concentrations of H(2)O(2). This chain is Peroxiredoxin-2 (PRDX2), found in Pongo abelii (Sumatran orangutan).